The sequence spans 89 residues: Inner kinetochore subunit mhf2 (89 aa).

This sequence belongs to the CENP-X/MHF2 family. In terms of assembly, the MHF histone-fold complex is a heterotetramer of 2 mhf1-mhf2 heterodimers. Component of the inner kinetochore constitutive centromere-associated network (CCAN) (also known as central kinetochore Sim4 complex in fission yeast), which is composed of at least cnl2, cnp3, cnp20, fta1, fta2, fta3, fta4, fta6, fta7, mal2, mhf1, mhf2, mis6, mis15, mis17, sim4 and wip1.

Its subcellular location is the nucleus. It localises to the cytoplasm. Its function is as follows. Component of a FANCM-MHF complex that promotes gene conversion at blocked replication forks, probably by reversal of the stalled fork. FANCM-MHF promotes non-crossover recombination. This is Inner kinetochore subunit mhf2 from Schizosaccharomyces pombe (strain 972 / ATCC 24843) (Fission yeast).